The primary structure comprises 172 residues: MSAQVSLELHHRISQFLFHEASLLDDWKFRDWLEQLDKEIRYTMRTTVNAQTRDRRKGVQPPTTWIFNDTKDQLERRIARLETGMAWAEEPPSRTRHLISNCQISETDIPNVFAVRVNYLLYRAQKERDETFYVGTRFDKVRRLEDDNWRLLERDIVLDQAVITSHNLSVLF.

Belongs to the bacterial ring-hydroxylating dioxygenase beta subunit family. As to quaternary structure, this dioxygenase system consists of four proteins: the two subunits of the hydroxylase component (HcaE and HcaF), a ferredoxin (HcaC) and a ferredoxin reductase (HcaD).

It carries out the reaction 3-phenylpropanoate + NADH + O2 + H(+) = 3-(cis-5,6-dihydroxycyclohexa-1,3-dien-1-yl)propanoate + NAD(+). It catalyses the reaction (E)-cinnamate + NADH + O2 + H(+) = (2E)-3-(cis-5,6-dihydroxycyclohexa-1,3-dien-1-yl)prop-2-enoate + NAD(+). It participates in aromatic compound metabolism; 3-phenylpropanoate degradation. Functionally, part of the multicomponent 3-phenylpropionate dioxygenase. Converts 3-phenylpropionic acid (PP) and cinnamic acid (CI) into 3-phenylpropionate-dihydrodiol (PP-dihydrodiol) and cinnamic acid-dihydrodiol (CI-dihydrodiol), respectively. This Shigella sonnei (strain Ss046) protein is 3-phenylpropionate/cinnamic acid dioxygenase subunit beta.